The primary structure comprises 443 residues: Threonine/serine transporter TdcC (443 aa).

The next 11 membrane-spanning stretches (helical) occupy residues 22–42 (TTWTLGLFGTAIGAGVLFFPI), 44–64 (AGFGGLIPILVMLVLAYPIAF), 97–117 (GVVITFLYFFAICPLLWIYGV), 140–160 (VVALLLLLLMAFVIWFGKDLM), 163–183 (VMSYLVWPFIASLVVISLSLI), 207–227 (ILVTVWLGISIMVFSFNFSPI), 259–279 (ASMLMVAVVMFFAFSCLFTLS), 319–339 (ASIIALVAIFKSFFGHYLGTL), 366–386 (LSMVFIMGSTWVVAYANPNIL), 389–409 (IEAMGAPIIASLLCLLPMYAI), and 423–443 (DNLFVTAIGLLTILNIVYKLF).

The protein belongs to the amino acid/polyamine transporter 2 family. SdaC/TdcC subfamily.

It is found in the cell inner membrane. The catalysed reaction is L-threonine(in) + H(+)(in) = L-threonine(out) + H(+)(out). It catalyses the reaction L-serine(in) + H(+)(in) = L-serine(out) + H(+)(out). Its function is as follows. Involved in the import of threonine and serine into the cell, with the concomitant import of a proton (symport system). This chain is Threonine/serine transporter TdcC, found in Klebsiella pneumoniae (strain 342).